We begin with the raw amino-acid sequence, 284 residues long: Homeobox-leucine zipper protein HAT4 (284 aa).

Positions 48–59 (ESFTSSVPNSDS) are enriched in polar residues. A disordered region spans residues 48-132 (ESFTSSVPNS…DGDNSRKKLR (85 aa)). The segment covering 89–100 (VSSPNSTVSSST) has biased composition (low complexity). Positions 126 to 185 (NSRKKLRLSKDQSAILEETFKDHSTLNPKQKQALAKQLGLRARQVEVWFQNRRARTKLKQ) form a DNA-binding region, homeobox. Residues 193–214 (LRRCCENLTEENRRLQKEVTEL) are leucine-zipper.

The protein belongs to the HD-ZIP homeobox family. Class II subfamily. In terms of assembly, interacts with DNA as homodimer. As to expression, predominantly expressed in leaves and stems.

It is found in the nucleus. In terms of biological role, probable transcription factor involved in the negative regulation of cell elongation and specific cell proliferation processes such as lateral root formation and secondary growth of the vascular system. Acts as a mediator of the red/far-red light effects on leaf cell expansion in the shading response. Binds to the DNA sequence 5'-CAAT[GC]ATTG-3'. Negatively regulates its own expression. The protein is Homeobox-leucine zipper protein HAT4 (HAT4) of Arabidopsis thaliana (Mouse-ear cress).